The primary structure comprises 229 residues: Lipoprotein-releasing system ATP-binding protein LolD (229 aa).

An ABC transporter domain is found at 7 to 229 (LKCKNVTKTY…KNGKLYKKNL (223 aa)). 43-50 (GDSGSGKS) lines the ATP pocket.

The protein belongs to the ABC transporter superfamily. Lipoprotein translocase (TC 3.A.1.125) family. As to quaternary structure, the complex is composed of two ATP-binding proteins (LolD) and two transmembrane proteins (LolC and LolE).

The protein localises to the cell membrane. Functionally, part of the ABC transporter complex LolCDE involved in the translocation of lipoproteins, in an ATP-dependent manner. The chain is Lipoprotein-releasing system ATP-binding protein LolD from Wigglesworthia glossinidia brevipalpis.